The following is a 55-amino-acid chain: Large ribosomal subunit protein bL33 (55 aa).

This sequence belongs to the bacterial ribosomal protein bL33 family.

This Leifsonia xyli subsp. xyli (strain CTCB07) protein is Large ribosomal subunit protein bL33.